We begin with the raw amino-acid sequence, 133 residues long: Small ribosomal subunit protein uS8 (133 aa).

Belongs to the universal ribosomal protein uS8 family. Part of the 30S ribosomal subunit. Contacts proteins S5 and S12.

One of the primary rRNA binding proteins, it binds directly to 16S rRNA central domain where it helps coordinate assembly of the platform of the 30S subunit. This Acaryochloris marina (strain MBIC 11017) protein is Small ribosomal subunit protein uS8.